We begin with the raw amino-acid sequence, 576 residues long: Tudor and KH domain-containing protein homolog (576 aa).

Residues E40–Q60 are disordered. KH domains lie at E65–L127 and V136–L199. The segment covering L209–R224 has biased composition (basic and acidic residues). The interval L209–A253 is disordered. Low complexity predominate over residues S232 to S243. The Tudor domain occupies A310–L375. The interval A556 to H576 is disordered. A compositionally biased stretch (low complexity) spans N561–H576.

The protein belongs to the Tdrkh family. Interacts (via C-terminus) with AGO3 (via the N-terminal region when symmetrically methylated on arginine residues); this interaction is RNA-independent and may be required for AGO3 localization to the nuage. Interacts (via Tudor domain) with piwi (via N-terminus). Interacts with tral and me31B. Ovaries (at protein level). Expressed in the ovary and testis.

Its subcellular location is the cytoplasm. The protein resides in the nucleus. It localises to the cytoplasmic ribonucleoprotein granule. Its function is as follows. Involved in the piwi-interacting RNA (piRNA) metabolic process, which mediates the repression of transposable elements during meiosis by forming complexes composed of piRNAs and Piwi proteins, and governs the methylation and subsequent repression of transposons which is essential for germline integrity. Likely to act by recruiting Piwi proteins such as AGO3 and piwi to the piRNA biogenesis machinery in the nuage. Required for the final steps of primary piRNA biogenesis by participating in the 3' end-trimming of piwi-bound intermediates into mature piRNAs. This chain is Tudor and KH domain-containing protein homolog, found in Drosophila melanogaster (Fruit fly).